Here is a 379-residue protein sequence, read N- to C-terminus: Homoserine O-succinyltransferase (379 aa).

The AB hydrolase-1 domain occupies 51-360 (NAVLICHALS…DSPYGHDAFL (310 aa)). Residue Ser-157 is the Nucleophile of the active site. Arg-227 lines the substrate pocket. Residues Asp-323 and His-356 contribute to the active site. Asp-357 provides a ligand contact to substrate.

It belongs to the AB hydrolase superfamily. MetX family. Homodimer.

Its subcellular location is the cytoplasm. It carries out the reaction L-homoserine + succinyl-CoA = O-succinyl-L-homoserine + CoA. Its pathway is amino-acid biosynthesis; L-methionine biosynthesis via de novo pathway; O-succinyl-L-homoserine from L-homoserine: step 1/1. Its function is as follows. Transfers a succinyl group from succinyl-CoA to L-homoserine, forming succinyl-L-homoserine. This chain is Homoserine O-succinyltransferase, found in Pseudomonas putida (strain W619).